Consider the following 145-residue polypeptide: ATP synthase epsilon chain (145 aa).

Belongs to the ATPase epsilon chain family. F-type ATPases have 2 components, CF(1) - the catalytic core - and CF(0) - the membrane proton channel. CF(1) has five subunits: alpha(3), beta(3), gamma(1), delta(1), epsilon(1). CF(0) has three main subunits: a, b and c.

Its subcellular location is the cell inner membrane. Functionally, produces ATP from ADP in the presence of a proton gradient across the membrane. The sequence is that of ATP synthase epsilon chain from Francisella tularensis subsp. mediasiatica (strain FSC147).